Reading from the N-terminus, the 281-residue chain is MSHGTYYECEPRAGQQPLEFSGARAGPGELGDMCEHEASIDLSAYIESGEEQLLSDLFAVKPAPEARELKGPGTPAFPHYLPADPRPFTYPPHTFGPDRKALGPGIYSSPGSYDPRAVAVKEEPRGPEGSRGASRSGYNPLQYQVAHCGQTAMHLPPGLASPSQPLRVLKAPLAAAAPPCSPLLKAPSPAGPSHKGKKAVNKDSLEYRLRRERNNIAVRKSRDKAKRRILETQQKVLEYMAENERLRSRVEQLTQELDTLRNLFRQIPEAANLIKGVGGCS.

Positions 1–30 (MSHGTYYECEPRAGQQPLEFSGARAGPGEL) are disordered. Lysine 121 participates in a covalent cross-link: Glycyl lysine isopeptide (Lys-Gly) (interchain with G-Cter in SUMO2). Serine 181 carries the phosphoserine modification. One can recognise a bZIP domain in the interval 204–267 (SLEYRLRRER…DTLRNLFRQI (64 aa)). The interval 208–228 (RLRRERNNIAVRKSRDKAKRR) is basic motif. The segment at 230–237 (LETQQKVL) is leucine-zipper.

Belongs to the bZIP family. C/EBP subfamily. As to quaternary structure, binds DNA as a homodimer and as a heterodimer. Can form stable heterodimers with CEBPA, CEBPB and CEBPD. Interacts with GATA1 and SPI1. Interacts with SMARCD2. In terms of processing, phosphorylated.

It localises to the nucleus. Functionally, transcriptional activator. C/EBP are DNA-binding proteins that recognize two different motifs: the CCAAT homology common to many promoters and the enhanced core homology common to many enhancers. Required for the promyelocyte-myelocyte transition in myeloid differentiation. The chain is CCAAT/enhancer-binding protein epsilon (CEBPE) from Ovis aries (Sheep).